The following is a 170-amino-acid chain: Ureidoglycolate lyase 1 (170 aa).

It belongs to the ureidoglycolate lyase family. As to quaternary structure, homodimer. Ni(2+) serves as cofactor.

It catalyses the reaction (S)-ureidoglycolate = urea + glyoxylate. It participates in nitrogen metabolism; (S)-allantoin degradation. Catalyzes the catabolism of the allantoin degradation intermediate (S)-ureidoglycolate, generating urea and glyoxylate. Involved in the utilization of allantoin as nitrogen source. The polypeptide is Ureidoglycolate lyase 1 (Rhizobium meliloti (strain 1021) (Ensifer meliloti)).